A 47-amino-acid chain; its full sequence is Glyceraldehyde-3-phosphate dehydrogenase, cytosolic (47 aa).

Belongs to the glyceraldehyde-3-phosphate dehydrogenase family. Homotetramer.

Its subcellular location is the cytoplasm. The catalysed reaction is D-glyceraldehyde 3-phosphate + phosphate + NAD(+) = (2R)-3-phospho-glyceroyl phosphate + NADH + H(+). The protein operates within carbohydrate degradation; glycolysis; pyruvate from D-glyceraldehyde 3-phosphate: step 1/5. This chain is Glyceraldehyde-3-phosphate dehydrogenase, cytosolic, found in Pseudotsuga menziesii (Douglas-fir).